We begin with the raw amino-acid sequence, 160 residues long: Cytochrome b6-f complex subunit 4 (160 aa).

3 helical membrane passes run 36 to 56 (LLYIFPVVILGTIACTVGLAV), 95 to 115 (LLGVLLMAAVPAGLLTVPFLE), and 131 to 151 (TVFLIGTVVSIWLGIGAALPI).

Belongs to the cytochrome b family. PetD subfamily. As to quaternary structure, the 4 large subunits of the cytochrome b6-f complex are cytochrome b6, subunit IV (17 kDa polypeptide, petD), cytochrome f and the Rieske protein, while the 4 small subunits are petG, petL, petM and petN. The complex functions as a dimer.

The protein resides in the plastid. The protein localises to the chloroplast thylakoid membrane. Functionally, component of the cytochrome b6-f complex, which mediates electron transfer between photosystem II (PSII) and photosystem I (PSI), cyclic electron flow around PSI, and state transitions. In Physcomitrium patens (Spreading-leaved earth moss), this protein is Cytochrome b6-f complex subunit 4.